The chain runs to 633 residues: Carbon monoxide dehydrogenase 2 (633 aa).

[4Fe-4S] cluster-binding residues include Cys-44, Cys-53, Cys-56, Cys-61, and Cys-73. Residues His-264, Cys-343, Cys-453, Cys-484, and Cys-525 each coordinate [Ni-4Fe-5S] cluster.

This sequence belongs to the Ni-containing carbon monoxide dehydrogenase family. As to quaternary structure, homodimer. [4Fe-4S] cluster serves as cofactor. The cofactor is [Ni-4Fe-5S] cluster.

The catalysed reaction is CO + 2 oxidized [2Fe-2S]-[ferredoxin] + H2O = 2 reduced [2Fe-2S]-[ferredoxin] + CO2 + 2 H(+). CODH oxidizes carbon monoxide coupled, via CooF, to the reduction of a hydrogen cation by a hydrogenase (possibly CooH). This Methanosarcina acetivorans (strain ATCC 35395 / DSM 2834 / JCM 12185 / C2A) protein is Carbon monoxide dehydrogenase 2 (cooS2).